The chain runs to 605 residues: Glucose oxidase (605 aa).

The first 18 residues, 1–18 (MVSVFLSTLLLAAATVQA), serve as a signal peptide directing secretion. The FAD site is built by leucine 52, threonine 53, and glutamate 73. N-linked (GlcNAc...) asparagine glycosylation occurs at asparagine 111. 4 residues coordinate FAD: serine 125, asparagine 129, glycine 130, and serine 132. Residues asparagine 183 and asparagine 190 are each glycosylated (N-linked (GlcNAc...) asparagine). A disulfide bridge links cysteine 186 with cysteine 228. FAD is bound at residue valine 272. Residues asparagine 335, asparagine 375, asparagine 410, and asparagine 519 are each glycosylated (N-linked (GlcNAc...) asparagine). The Proton acceptor role is filled by histidine 538. O2 contacts are provided by lysine 559 and valine 560. Glycine 571 and methionine 583 together coordinate FAD.

Belongs to the GMC oxidoreductase family. Homodimer. Requires FAD as cofactor.

The protein localises to the secreted. The protein resides in the cell wall. It localises to the cytoplasmic vesicle. The enzyme catalyses beta-D-glucose + O2 = D-glucono-1,5-lactone + H2O2. Functionally, glucose oxidase catalyzes the oxidation of beta-D-glucose to D-glucono-delta-lactone and hydrogen peroxide in the presence of molecular oxygen. D-glucono-delta-lactone is sequentially hydrolyzed by lactonase to D-gluconic acid, and the resulting hydrogen peroxide is hydrolyzed by catalase to oxygen and water. Glucose oxidase alone indirectly causes toxicity in the presence of glucose and is the active compound of the antifungal antibiotic talaron. Responsible for inhibition of germination of microsclerotia of Verticillium dahliae. This is Glucose oxidase from Talaromyces flavus.